We begin with the raw amino-acid sequence, 92 residues long: Major allergen I polypeptide chain 1 (92 aa).

The N-terminal stretch at 1–22 (MKGACVLVLLWAALLLISGGNC) is a signal peptide.

This sequence belongs to the secretoglobin family. Heterotetramer composed of two non-covalently linked disulfide-linked heterodimer of chains 1 and 2. Saliva and sebaceous glands.

The protein localises to the secreted. The chain is Major allergen I polypeptide chain 1 (CH1) from Felis catus (Cat).